Here is a 310-residue protein sequence, read N- to C-terminus: HPr kinase/phosphorylase (310 aa).

Residues His-138 and Lys-159 contribute to the active site. 153-160 (GDSGIGKS) is an ATP binding site. Mg(2+) is bound at residue Ser-160. Asp-177 serves as the catalytic Proton acceptor; for phosphorylation activity. Proton donor; for dephosphorylation activity. Residues 201–210 (LEIRGVGIID) are important for the catalytic mechanism of both phosphorylation and dephosphorylation. Glu-202 lines the Mg(2+) pocket. Arg-243 is an active-site residue. The interval 264–269 (PVKTGR) is important for the catalytic mechanism of dephosphorylation.

It belongs to the HPrK/P family. Homohexamer. Mg(2+) serves as cofactor.

The enzyme catalyses [HPr protein]-L-serine + ATP = [HPr protein]-O-phospho-L-serine + ADP + H(+). It carries out the reaction [HPr protein]-O-phospho-L-serine + phosphate + H(+) = [HPr protein]-L-serine + diphosphate. Catalyzes the ATP- as well as the pyrophosphate-dependent phosphorylation of a specific serine residue in HPr, a phosphocarrier protein of the phosphoenolpyruvate-dependent sugar phosphotransferase system (PTS). HprK/P also catalyzes the pyrophosphate-producing, inorganic phosphate-dependent dephosphorylation (phosphorolysis) of seryl-phosphorylated HPr (P-Ser-HPr). The two antagonistic activities of HprK/P are regulated by several intracellular metabolites, which change their concentration in response to the absence or presence of rapidly metabolisable carbon sources (glucose, fructose, etc.) in the growth medium. Therefore, by controlling the phosphorylation state of HPr, HPrK/P is a sensor enzyme that plays a major role in the regulation of carbon metabolism and sugar transport: it mediates carbon catabolite repression (CCR), and regulates PTS-catalyzed carbohydrate uptake and inducer exclusion. In Streptococcus pyogenes serotype M3 (strain ATCC BAA-595 / MGAS315), this protein is HPr kinase/phosphorylase (hprK).